The following is a 367-amino-acid chain: Farnesyl pyrophosphate synthase (367 aa).

Residues Lys71, Arg74, and Gln110 each contribute to the isopentenyl diphosphate site. Positions 117 and 121 each coordinate Mg(2+). Arg126 serves as a coordination point for dimethylallyl diphosphate. Arg127 lines the isopentenyl diphosphate pocket. Dimethylallyl diphosphate-binding residues include Lys214, Thr215, Gln254, Lys271, and Lys280.

Belongs to the FPP/GGPP synthase family. Homodimer. The cofactor is Mg(2+).

It localises to the cytoplasm. The enzyme catalyses isopentenyl diphosphate + dimethylallyl diphosphate = (2E)-geranyl diphosphate + diphosphate. It carries out the reaction isopentenyl diphosphate + (2E)-geranyl diphosphate = (2E,6E)-farnesyl diphosphate + diphosphate. It participates in isoprenoid biosynthesis; farnesyl diphosphate biosynthesis; farnesyl diphosphate from geranyl diphosphate and isopentenyl diphosphate: step 1/1. It functions in the pathway isoprenoid biosynthesis; geranyl diphosphate biosynthesis; geranyl diphosphate from dimethylallyl diphosphate and isopentenyl diphosphate: step 1/1. Catalyzes the sequential condensation of isopentenyl pyrophosphate with the allylic pyrophosphates, dimethylallyl pyrophosphate, and then with the resultant geranylpyrophosphate to the ultimate product farnesyl pyrophosphate. In Gallus gallus (Chicken), this protein is Farnesyl pyrophosphate synthase (FDPS).